The primary structure comprises 202 residues: Probable GTP-binding protein EngB (202 aa).

The region spanning 26 to 200 is the EngB-type G domain; it reads VSKEIAFTGS…KAQLDSWFSI (175 aa). GTP contacts are provided by residues 34-41, 61-65, 79-82, 146-149, and 179-181; these read GSSNVGKS, GSTKT, DLPG, NKAD, and FSS. Mg(2+) is bound by residues S41 and T63.

Belongs to the TRAFAC class TrmE-Era-EngA-EngB-Septin-like GTPase superfamily. EngB GTPase family. It depends on Mg(2+) as a cofactor.

In terms of biological role, necessary for normal cell division and for the maintenance of normal septation. This Baumannia cicadellinicola subsp. Homalodisca coagulata protein is Probable GTP-binding protein EngB.